The chain runs to 473 residues: Probable acid phosphatase DDB_G0284755 (473 aa).

His-94 serves as the catalytic Nucleophile. Asp-359 (proton donor) is an active-site residue.

Belongs to the histidine acid phosphatase family.

The catalysed reaction is a phosphate monoester + H2O = an alcohol + phosphate. The sequence is that of Probable acid phosphatase DDB_G0284755 from Dictyostelium discoideum (Social amoeba).